The following is a 769-amino-acid chain: Neutral alpha-glucosidase C (769 aa).

The active-site Nucleophile is the D366. E369 is a catalytic residue. D442 functions as the Proton donor in the catalytic mechanism.

It belongs to the glycosyl hydrolase 31 family.

It carries out the reaction Hydrolysis of terminal, non-reducing (1-&gt;4)-linked alpha-D-glucose residues with release of alpha-D-glucose.. Functionally, has alpha-glucosidase activity. This is Neutral alpha-glucosidase C (GANC) from Macaca fascicularis (Crab-eating macaque).